The primary structure comprises 454 residues: Glutamate--tRNA ligase (454 aa).

Positions 7–17 (PSPTGCLHIGG) match the 'HIGH' region motif. C96, C98, C123, and D125 together coordinate Zn(2+). The 'KMSKS' region signature appears at 230–234 (RLSKR). ATP is bound at residue K233.

It belongs to the class-I aminoacyl-tRNA synthetase family. Glutamate--tRNA ligase type 1 subfamily. As to quaternary structure, monomer. Zn(2+) serves as cofactor.

It localises to the cytoplasm. The catalysed reaction is tRNA(Glu) + L-glutamate + ATP = L-glutamyl-tRNA(Glu) + AMP + diphosphate. Catalyzes the attachment of glutamate to tRNA(Glu) in a two-step reaction: glutamate is first activated by ATP to form Glu-AMP and then transferred to the acceptor end of tRNA(Glu). In Ruthia magnifica subsp. Calyptogena magnifica, this protein is Glutamate--tRNA ligase.